A 399-amino-acid chain; its full sequence is MLRLGRSAASEVSSIRNSLQLQLEQRGARPMQCAYQTQSHSNPEGAKRGRSPMSLAVMGAAALSVGLELQTDGIAQARAAMEPGTQLQRHKWQLFDQIGAGAFGVVRLGMHEESGEVAAVKIVPLENPNDQRSYPALEREIAALKLVKALGGHNSIVDLRDVYVEGRKLFLVTELARGGELFEQIVAYGSFPELKARDVAREMASALSFMHRHGLVHKDVKPENILMSARVVDHNSGVYRKSNRHESSSLVKLADFGSAGPASVNTNLEDIGTAAYLPPEVLNSGLCTSACDMWALGCVLYIMLSGSHPYDLDGMSADSVVEHRVKSEPVTFDFSAWDNVSPHAKDLISKLLVKDPTLRLTADQMLQHPWMNASAEAAAAGLRRPSPLLAGQPIPISPA.

The segment at 30–50 (PMQCAYQTQSHSNPEGAKRGR) is disordered. Residues 92–371 (WQLFDQIGAG…ADQMLQHPWM (280 aa)) enclose the Protein kinase domain. Residues 98–106 (IGAGAFGVV) and Lys-121 each bind ATP. The active-site Proton acceptor is the Asp-219.

Belongs to the protein kinase superfamily. CAMK Ser/Thr protein kinase family.

The catalysed reaction is L-seryl-[protein] + ATP = O-phospho-L-seryl-[protein] + ADP + H(+). It carries out the reaction L-threonyl-[protein] + ATP = O-phospho-L-threonyl-[protein] + ADP + H(+). In terms of biological role, may regulate an early stage of the zoospore pathway. In Phytophthora infestans (strain T30-4) (Potato late blight agent), this protein is Serine/threonine-protein kinase PKZ1.